The following is a 160-amino-acid chain: Ribosomal RNA large subunit methyltransferase H (160 aa).

S-adenosyl-L-methionine contacts are provided by residues Leu-76, Gly-108, and 127-132 (FGRMTF).

The protein belongs to the RNA methyltransferase RlmH family. Homodimer.

It localises to the cytoplasm. It catalyses the reaction pseudouridine(1915) in 23S rRNA + S-adenosyl-L-methionine = N(3)-methylpseudouridine(1915) in 23S rRNA + S-adenosyl-L-homocysteine + H(+). Functionally, specifically methylates the pseudouridine at position 1915 (m3Psi1915) in 23S rRNA. In Methylocella silvestris (strain DSM 15510 / CIP 108128 / LMG 27833 / NCIMB 13906 / BL2), this protein is Ribosomal RNA large subunit methyltransferase H.